A 365-amino-acid polypeptide reads, in one-letter code: MNQHITASQAIADPTHARPDASQDVVRLVDLKRRFGTTPAIDGISLTVRKGEILGIIGRSGAGKSTLIRCLNGLERPDSGEVFIEGREIGRLGERDLQPLRRRIGMIFQHFNLLSAKTVEDNVALPLKIEGRPKAERLARAAELLDLVGLSEKARAYPASLSGGQKQRVGIARALAARPALLLSDEATSALDPETTRSILALLKDINRQLGLTILLITHEMEVIRSIADRVAVIDAGRIVEQGPVWSVFADPQSDITKSLLGAIRPQLPAELAARLLPASGAETILRVDVAGDAASGPLLSDLATSVPGAFRLVHGGIDHIQQQPVGTLFLSIPGSDASHLAAVITFLKARQARVEVLGHVAHPV.

The 236-residue stretch at 26–261 (VRLVDLKRRF…PQSDITKSLL (236 aa)) folds into the ABC transporter domain. Position 58 to 65 (58 to 65 (GRSGAGKS)) interacts with ATP.

The protein belongs to the ABC transporter superfamily. Methionine importer (TC 3.A.1.24) family. The complex is composed of two ATP-binding proteins (MetN), two transmembrane proteins (MetI) and a solute-binding protein (MetQ).

Its subcellular location is the cell inner membrane. The enzyme catalyses L-methionine(out) + ATP + H2O = L-methionine(in) + ADP + phosphate + H(+). The catalysed reaction is D-methionine(out) + ATP + H2O = D-methionine(in) + ADP + phosphate + H(+). Its function is as follows. Part of the ABC transporter complex MetNIQ involved in methionine import. Responsible for energy coupling to the transport system. The sequence is that of Methionine import ATP-binding protein MetN from Mesorhizobium japonicum (strain LMG 29417 / CECT 9101 / MAFF 303099) (Mesorhizobium loti (strain MAFF 303099)).